We begin with the raw amino-acid sequence, 362 residues long: Phosphoserine aminotransferase (362 aa).

L-glutamate is bound by residues Ser-9 and Arg-42. Pyridoxal 5'-phosphate is bound by residues 76–77 (AR), Trp-102, Thr-153, Asp-174, and Gln-197. Lys-198 carries the N6-(pyridoxal phosphate)lysine modification. 239 to 240 (NT) is a binding site for pyridoxal 5'-phosphate.

This sequence belongs to the class-V pyridoxal-phosphate-dependent aminotransferase family. SerC subfamily. In terms of assembly, homodimer. Pyridoxal 5'-phosphate serves as cofactor.

The protein resides in the cytoplasm. The enzyme catalyses O-phospho-L-serine + 2-oxoglutarate = 3-phosphooxypyruvate + L-glutamate. The catalysed reaction is 4-(phosphooxy)-L-threonine + 2-oxoglutarate = (R)-3-hydroxy-2-oxo-4-phosphooxybutanoate + L-glutamate. The protein operates within amino-acid biosynthesis; L-serine biosynthesis; L-serine from 3-phospho-D-glycerate: step 2/3. Its pathway is cofactor biosynthesis; pyridoxine 5'-phosphate biosynthesis; pyridoxine 5'-phosphate from D-erythrose 4-phosphate: step 3/5. Its function is as follows. Catalyzes the reversible conversion of 3-phosphohydroxypyruvate to phosphoserine and of 3-hydroxy-2-oxo-4-phosphonooxybutanoate to phosphohydroxythreonine. This chain is Phosphoserine aminotransferase, found in Photorhabdus laumondii subsp. laumondii (strain DSM 15139 / CIP 105565 / TT01) (Photorhabdus luminescens subsp. laumondii).